The following is a 563-amino-acid chain: Arginine--tRNA ligase (563 aa).

The short motif at 121–131 is the 'HIGH' region element; sequence PNIAKPFSIGH.

This sequence belongs to the class-I aminoacyl-tRNA synthetase family. As to quaternary structure, monomer.

It localises to the cytoplasm. The enzyme catalyses tRNA(Arg) + L-arginine + ATP = L-arginyl-tRNA(Arg) + AMP + diphosphate. The sequence is that of Arginine--tRNA ligase from Streptococcus thermophilus (strain ATCC BAA-250 / LMG 18311).